The chain runs to 318 residues: Methionyl-tRNA formyltransferase (318 aa).

Residue Ser-112–Pro-115 participates in (6S)-5,6,7,8-tetrahydrofolate binding.

This sequence belongs to the Fmt family.

It carries out the reaction L-methionyl-tRNA(fMet) + (6R)-10-formyltetrahydrofolate = N-formyl-L-methionyl-tRNA(fMet) + (6S)-5,6,7,8-tetrahydrofolate + H(+). Functionally, attaches a formyl group to the free amino group of methionyl-tRNA(fMet). The formyl group appears to play a dual role in the initiator identity of N-formylmethionyl-tRNA by promoting its recognition by IF2 and preventing the misappropriation of this tRNA by the elongation apparatus. The chain is Methionyl-tRNA formyltransferase from Shewanella baltica (strain OS223).